Reading from the N-terminus, the 475-residue chain is Probable GABA permease (475 aa).

The next 12 helical transmembrane spans lie at valine 27–alanine 47, isoleucine 48–leucine 68, leucine 105–leucine 125, alanine 127–valine 147, phenylalanine 163–valine 183, alanine 211–isoleucine 231, valine 250–proline 270, leucine 296–threonine 316, proline 345–proline 365, valine 368–alanine 388, proline 413–methionine 433, and histidine 438–alanine 458.

This sequence belongs to the amino acid-polyamine-organocation (APC) superfamily. Amino acid transporter (AAT) (TC 2.A.3.1) family.

The protein localises to the membrane. In terms of biological role, involved in the degradation of beta-alanine. This is Probable GABA permease (bauD) from Pseudomonas aeruginosa (strain ATCC 15692 / DSM 22644 / CIP 104116 / JCM 14847 / LMG 12228 / 1C / PRS 101 / PAO1).